Consider the following 393-residue polypeptide: Formate-dependent phosphoribosylglycinamide formyltransferase (393 aa).

Residues 22-23 and Glu82 each bind N(1)-(5-phospho-beta-D-ribosyl)glycinamide; that span reads EL. Residues Arg114, Lys155, 160-165, 195-198, and Glu203 each bind ATP; these read SSGHGQ and EGFV. The 190-residue stretch at 119–308 folds into the ATP-grasp domain; that stretch reads RLAAEKLKLP…EFALHARAIL (190 aa). Mg(2+) is bound by residues Glu267 and Glu279. N(1)-(5-phospho-beta-D-ribosyl)glycinamide is bound by residues Asp286, Lys356, and 363–364; that span reads RR.

Belongs to the PurK/PurT family. Homodimer.

The enzyme catalyses N(1)-(5-phospho-beta-D-ribosyl)glycinamide + formate + ATP = N(2)-formyl-N(1)-(5-phospho-beta-D-ribosyl)glycinamide + ADP + phosphate + H(+). The protein operates within purine metabolism; IMP biosynthesis via de novo pathway; N(2)-formyl-N(1)-(5-phospho-D-ribosyl)glycinamide from N(1)-(5-phospho-D-ribosyl)glycinamide (formate route): step 1/1. Involved in the de novo purine biosynthesis. Catalyzes the transfer of formate to 5-phospho-ribosyl-glycinamide (GAR), producing 5-phospho-ribosyl-N-formylglycinamide (FGAR). Formate is provided by PurU via hydrolysis of 10-formyl-tetrahydrofolate. This is Formate-dependent phosphoribosylglycinamide formyltransferase from Histophilus somni (strain 129Pt) (Haemophilus somnus).